Here is a 766-residue protein sequence, read N- to C-terminus: Tetratricopeptide repeat protein 14 (766 aa).

The interval 35–55 (LGTAAEPARGAAPPPGAGRKE) is disordered. One can recognise an S1 motif domain in the interval 125–207 (GDIVIGRISS…YHEKLAVSLY (83 aa)). 4 TPR repeats span residues 209–242 (SSLP…NSNS), 306–339 (ALKC…DKQN), 341–373 (EALV…CPTH), and 381–414 (CQTL…DETF). The tract at residues 463–743 (EEKRLKKKRR…PDSRVKKNLP (281 aa)) is disordered. Over residues 475–496 (SSSSSVSSADESVSSSSSSSSS) the composition is skewed to low complexity. Basic residues predominate over residues 497 to 506 (SHKRHKKSKR). Residues 539 to 550 (PTNTSASFLNQK) are compositionally biased toward polar residues. Basic and acidic residues predominate over residues 551–562 (QEVEKLLEKQDR). The span at 594-605 (FYNSYKTQAGSS) shows a compositional bias: polar residues. 2 stretches are compositionally biased toward basic and acidic residues: residues 606 to 616 (KTEKPYKSERH) and 629 to 657 (NSED…RRWE). Residues 661–673 (VKYSTSPASSDYS) show a composition bias toward polar residues. Residue Ser-666 is modified to Phosphoserine. Positions 707–738 (RVYEKEDSCGEGNRNEAPEEMLNSKEQPDSRV) are enriched in basic and acidic residues.

This sequence belongs to the TTC14 family.

This is Tetratricopeptide repeat protein 14 from Mus musculus (Mouse).